The chain runs to 444 residues: Serine carboxypeptidase-like 50 (444 aa).

Residues 1–22 form the signal peptide; that stretch reads MEQATTLFILLSTLLLAVSVES. C79 and C308 are joined by a disulfide. The active site involves S170. Residue N263 is glycosylated (N-linked (GlcNAc...) asparagine). D345 is a catalytic residue. An N-linked (GlcNAc...) asparagine glycan is attached at N361. H403 is a catalytic residue.

It belongs to the peptidase S10 family. Ubiquitous.

Its subcellular location is the secreted. Probable carboxypeptidase. This Arabidopsis thaliana (Mouse-ear cress) protein is Serine carboxypeptidase-like 50 (SCPL50).